The sequence spans 74 residues: Protein Vpu (74 aa).

Topologically, residues 1–4 (MLWL) are extracellular. The helical transmembrane segment at 5 to 25 (GFIALGVAIIIAAIIWVLLYK) threads the bilayer. Residues 26-74 (EYKKIKLQEKIEQIRQKIRDRTEDRGKESDGDAEWLAILLSPDKLDNWV) lie on the Cytoplasmic side of the membrane. Position 54 is a phosphoserine; by host CK2 (serine 54).

The protein belongs to the HIV-1 VPU protein family. In terms of assembly, homopentamer. Interacts with host CD4 and BRTC; these interactions induce proteasomal degradation of CD4. Interacts with host BST2; this interaction leads to the degradation of host BST2. Interacts with host FBXW11. Interacts with host AP1M1; this interaction plays a role in the mistrafficking and subsequent degradation of host BST2. Interacts with host RANBP2; this interaction allows Vpu to down-regulate host BLM sumoylation. Post-translationally, phosphorylated by host CK2. This phosphorylation is necessary for interaction with human BTRC and degradation of CD4.

The protein resides in the host membrane. Ion channel activity is inhibited by hexamethylene amiloride in vitro. In terms of biological role, enhances virion budding by targeting host CD4 and Tetherin/BST2 to proteasome degradation. Degradation of CD4 prevents any unwanted premature interactions between viral Env and its host receptor CD4 in the endoplasmic reticulum. Degradation of antiretroviral protein Tetherin/BST2 is important for virion budding, as BST2 tethers new viral particles to the host cell membrane. Mechanistically, Vpu bridges either CD4 or BST2 to BTRC, a substrate recognition subunit of the Skp1/Cullin/F-box protein E3 ubiquitin ligase, induces their ubiquitination and subsequent proteasomal degradation. The alteration of the E3 ligase specificity by Vpu seems to promote the degradation of host IKBKB, leading to NF-kappa-B down-regulation and subsequent apoptosis. Acts as a viroporin that forms an oligomeric ion channel in membranes. Modulates the host DNA repair mechanisms to promote degradation of nuclear viral cDNA in cells that are already productively infected in order to suppress immune sensing and proviral hyper-integration (superinfection). Manipulates PML-NBs and modulates SUMOylation of host BLM protein thereby enhancing its DNA-end processing activity toward viral unintegrated linear DNA. Also inhibits RAD52-mediated homologous repair of viral cDNA, preventing the generation of dead-end circular forms of single copies of the long terminal repeat and permitting sustained nucleolytic attack. This chain is Protein Vpu, found in Human immunodeficiency virus type 1 group N (isolate YBF106) (HIV-1).